Here is a 469-residue protein sequence, read N- to C-terminus: GTPase Der (469 aa).

EngA-type G domains are found at residues 30 to 193 (PVLA…PEVA) and 203 to 376 (RRVA…ASWD). Residues 36-43 (GRPNVGKS), 83-87 (DTGGW), 145-148 (NKVD), 209-216 (GKPNVGKS), 256-260 (DTAGL), and 321-324 (NKWD) each bind GTP. The KH-like domain maps to 377–459 (TRIPTGPLNS…PIRINVRVRE (83 aa)).

This sequence belongs to the TRAFAC class TrmE-Era-EngA-EngB-Septin-like GTPase superfamily. EngA (Der) GTPase family. In terms of assembly, associates with the 50S ribosomal subunit.

GTPase that plays an essential role in the late steps of ribosome biogenesis. This is GTPase Der from Mycobacterium marinum (strain ATCC BAA-535 / M).